The primary structure comprises 153 residues: Aspartate carbamoyltransferase regulatory chain (153 aa).

Zn(2+) is bound by residues Cys109, Cys114, Cys138, and Cys141.

Belongs to the PyrI family. Contains catalytic and regulatory chains. The cofactor is Zn(2+).

Functionally, involved in allosteric regulation of aspartate carbamoyltransferase. The protein is Aspartate carbamoyltransferase regulatory chain of Wigglesworthia glossinidia brevipalpis.